The primary structure comprises 498 residues: Elastase (498 aa).

An N-terminal signal peptide occupies residues 1–23 (MKKVSTLDLLFVAIMGVSPAAFA). A propeptide spanning residues 24-197 (ADLIDVSKLP…VLDQWEGLAH (174 aa)) is cleaved from the precursor. An intrachain disulfide couples Cys227 to Cys255. A Phosphothreonine modification is found at Thr236. Residue Asp333 participates in Ca(2+) binding. His337 is a Zn(2+) binding site. The active site involves Glu338. Residues His341 and Glu361 each coordinate Zn(2+). Ca(2+) is bound by residues Glu369, Glu372, Asp380, and Leu382. The active-site Proton donor is the His420. The cysteines at positions 467 and 494 are disulfide-linked.

This sequence belongs to the peptidase M4 family. Ca(2+) is required as a cofactor. Zn(2+) serves as cofactor. In terms of processing, made as a pre-pro-protein which is exported to the periplasm. Probably autocatalyzes cleavage of its pro-peptide. The pro-peptide can be secreted with mature elastase.

The protein localises to the secreted. It catalyses the reaction Hydrolysis of proteins including elastin, collagen types III and IV, fibronectin and immunoglobulin A, generally with bulky hydrophobic group at P1'. Insulin B chain cleavage pattern identical to that of thermolysin, but specificity differs in other respects.. Cleaves host elastase, collagen, IgI and several complement components as well as endogenous pro-aminopeptidase, pro-chitin-binding protein (cbpD). Cleaves its own pro-peptide. Involved in the pathogenesis of P.aeruginosa infections. The sequence is that of Elastase (lasB) from Pseudomonas aeruginosa (strain UCBPP-PA14).